Reading from the N-terminus, the 234-residue chain is Large ribosomal subunit protein eL6 (234 aa).

The protein belongs to the eukaryotic ribosomal protein eL6 family.

The protein is Large ribosomal subunit protein eL6 (RPL6) of Mesembryanthemum crystallinum (Common ice plant).